The sequence spans 55 residues: Large ribosomal subunit protein bL32 (55 aa).

Positions 1–19 are enriched in basic residues; the sequence is MAVPKFKKSRANTRARRSQ. A disordered region spans residues 1–22; that stretch reads MAVPKFKKSRANTRARRSQWKA.

It belongs to the bacterial ribosomal protein bL32 family.

This Corynebacterium urealyticum (strain ATCC 43042 / DSM 7109) protein is Large ribosomal subunit protein bL32.